We begin with the raw amino-acid sequence, 403 residues long: Aromatic-L-amino-acid decarboxylase (403 aa).

T8 lines the substrate pocket. Residues A74 and S75 each coordinate pyridoxal 5'-phosphate. H118 lines the substrate pocket. The active site involves H118. The pyridoxal 5'-phosphate site is built by D197 and N226. N6-(pyridoxal phosphate)lysine is present on K229. The tract at residues 250-276 (NAFNVDPLYLKHDMQGSAPDYRHWQIP) is disordered.

Belongs to the group II decarboxylase family. Homodimer. The cofactor is pyridoxal 5'-phosphate.

The catalysed reaction is L-dopa + H(+) = dopamine + CO2. It carries out the reaction 5-hydroxy-L-tryptophan + H(+) = serotonin + CO2. In terms of biological role, catalyzes the decarboxylation of L-3,4-dihydroxyphenylalanine (L-DOPA) to dopamine and L-5-hydroxytryptophan (5-HTP) to serotonin. Catalyzes the formation of serotonin more efficiently than dopamine. Displays no activity to tyrosine. Variation in the synthesis of bioamines may be a factor contributing to natural variation in life span. This is Aromatic-L-amino-acid decarboxylase (Ddc) from Drosophila lebanonensis (Fruit fly).